Reading from the N-terminus, the 372-residue chain is O-methyltransferase bfoE (372 aa).

Trp-186 lines the S-adenosyl-L-methionine pocket. The active-site Proton acceptor is the His-285.

Belongs to the class I-like SAM-binding methyltransferase superfamily. Cation-independent O-methyltransferase family.

It participates in secondary metabolite biosynthesis. Its function is as follows. Cytochrome P450 monooxygenase; part of the gene cluster that mediates the biosynthesis of bifonsecin B, a dimeric gamma-naphthopyrone. The first step in the biosynthesis of bifonsecin B is the production of gamma-naphthopyrone precursor YWA1 by the non-reducing polyketide synthase albA, via condensation of one acetyl-CoA starter unit with 6 malonyl-CoA units. YWA1 is then methylated by bfoE at position C-6 to yield foncesin which is further methylated at position C-8 by bfoD to produce fonsecin B. A key enzyme in the biosynthetic pathway is the cytochrome P450 monooxygenase bfoB which catalyzes the oxidative dimerization of fonsecin B to bifonsecin B. Bfob also catalyzes the oxidative dimerization of rubrofusarin B into nigerone. The stereoselectivity of bfoB is influenced by the two natural monomeric substrates; homodimerization of fonsecin B yields a stereochemically pure biaryl, M-foncerine B, while rubrofusarin B yields a mixture of enantiomers M- and P-nigerone. The polypeptide is O-methyltransferase bfoE (Aspergillus brasiliensis (strain CBS 101740 / IMI 381727 / IBT 21946)).